We begin with the raw amino-acid sequence, 330 residues long: Aspartate--ammonia ligase (330 aa).

This sequence belongs to the class-II aminoacyl-tRNA synthetase family. AsnA subfamily.

Its subcellular location is the cytoplasm. The catalysed reaction is L-aspartate + NH4(+) + ATP = L-asparagine + AMP + diphosphate + H(+). It participates in amino-acid biosynthesis; L-asparagine biosynthesis; L-asparagine from L-aspartate (ammonia route): step 1/1. In Pectobacterium carotovorum subsp. carotovorum (strain PC1), this protein is Aspartate--ammonia ligase.